The following is a 373-amino-acid chain: Probable tRNA sulfurtransferase (373 aa).

The region spanning 54–158 (NKNIEELSKV…NDVAYFYYKI (105 aa)) is the THUMP domain. Residues 176 to 177 (LF), 201 to 202 (NF), K256, G278, and Q287 each bind ATP.

The protein belongs to the ThiI family.

The protein localises to the cytoplasm. The enzyme catalyses [ThiI sulfur-carrier protein]-S-sulfanyl-L-cysteine + a uridine in tRNA + 2 reduced [2Fe-2S]-[ferredoxin] + ATP + H(+) = [ThiI sulfur-carrier protein]-L-cysteine + a 4-thiouridine in tRNA + 2 oxidized [2Fe-2S]-[ferredoxin] + AMP + diphosphate. The catalysed reaction is [ThiS sulfur-carrier protein]-C-terminal Gly-Gly-AMP + S-sulfanyl-L-cysteinyl-[cysteine desulfurase] + AH2 = [ThiS sulfur-carrier protein]-C-terminal-Gly-aminoethanethioate + L-cysteinyl-[cysteine desulfurase] + A + AMP + 2 H(+). It participates in cofactor biosynthesis; thiamine diphosphate biosynthesis. Catalyzes the ATP-dependent transfer of a sulfur to tRNA to produce 4-thiouridine in position 8 of tRNAs, which functions as a near-UV photosensor. Also catalyzes the transfer of sulfur to the sulfur carrier protein ThiS, forming ThiS-thiocarboxylate. This is a step in the synthesis of thiazole, in the thiamine biosynthesis pathway. The sulfur is donated as persulfide by IscS. The sequence is that of Probable tRNA sulfurtransferase from Saccharolobus islandicus (strain L.S.2.15 / Lassen #1) (Sulfolobus islandicus).